The following is a 250-amino-acid chain: Phosphoribosylaminoimidazole-succinocarboxamide synthase (250 aa).

It belongs to the SAICAR synthetase family.

It carries out the reaction 5-amino-1-(5-phospho-D-ribosyl)imidazole-4-carboxylate + L-aspartate + ATP = (2S)-2-[5-amino-1-(5-phospho-beta-D-ribosyl)imidazole-4-carboxamido]succinate + ADP + phosphate + 2 H(+). Its pathway is purine metabolism; IMP biosynthesis via de novo pathway; 5-amino-1-(5-phospho-D-ribosyl)imidazole-4-carboxamide from 5-amino-1-(5-phospho-D-ribosyl)imidazole-4-carboxylate: step 1/2. The sequence is that of Phosphoribosylaminoimidazole-succinocarboxamide synthase from Bifidobacterium adolescentis (strain ATCC 15703 / DSM 20083 / NCTC 11814 / E194a).